We begin with the raw amino-acid sequence, 121 residues long: Large ribosomal subunit protein uL14 (121 aa).

It belongs to the universal ribosomal protein uL14 family. Part of the 50S ribosomal subunit. Forms a cluster with proteins L3 and L19. In the 70S ribosome, L14 and L19 interact and together make contacts with the 16S rRNA in bridges B5 and B8.

In terms of biological role, binds to 23S rRNA. Forms part of two intersubunit bridges in the 70S ribosome. In Synechococcus sp. (strain CC9311), this protein is Large ribosomal subunit protein uL14.